We begin with the raw amino-acid sequence, 515 residues long: Alpha-1B adrenergic receptor (515 aa).

Topologically, residues 1–45 (MNPDLDTGHNTSAPAQWGELKDANFTGPNQTSSNSTLPQLDVTRA) are extracellular. 3 N-linked (GlcNAc...) asparagine glycosylation sites follow: Asn-10, Asn-24, and Asn-34. Residues 46–70 (ISVGLVLGAFILFAIVGNILVILSV) traverse the membrane as a helical segment. Over 71–83 (ACNRHLRTPTNYF) the chain is Cytoplasmic. The chain crosses the membrane as a helical span at residues 84-105 (IVNLAIADLLLSFTVLPFSATL). The Extracellular segment spans residues 106–115 (EVLGYWVLGR). A helical transmembrane segment spans residues 116–141 (IFCDIWAAVDVLCCTASILSLCAISI). Cysteines 118 and 195 form a disulfide. Topologically, residues 142-161 (DRYIGVRYSLQYPTLVTRRK) are cytoplasmic. Residues 162–184 (AILALLSVWVLSTVISIGPLLGW) traverse the membrane as a helical segment. The Extracellular portion of the chain corresponds to 185-201 (KEPAPNDDKECGVTEEP). A helical transmembrane segment spans residues 202–224 (FYALFSSLGSFYIPLAVILVMYC). Over 225–295 (RVYIVAKRTT…FSREKKAAKT (71 aa)) the chain is Cytoplasmic. Thr-264 carries the phosphothreonine modification. Residues 296 to 319 (LGIVVGMFILCWLPFFIALPLGSL) form a helical membrane-spanning segment. The Extracellular portion of the chain corresponds to 320–326 (FSTLKPP). A helical transmembrane segment spans residues 327–351 (DAVFKVVFWLGYFNSCLNPIIYPCS). At 352–515 (SKEFKRAFMR…SNMPLAPGHF (164 aa)) the chain is on the cytoplasmic side. Cys-365 carries the S-palmitoyl cysteine lipid modification. Positions 368–378 (RSGRRRRRRRR) match the Nuclear localization signal motif. Disordered regions lie at residues 392-428 (GGSLERSQSRKDSLDDSGSCMSGSQRTLPSASPSPGY) and 473-515 (LLGE…PGHF). Over residues 410–424 (SCMSGSQRTLPSASP) the composition is skewed to polar residues.

Belongs to the G-protein coupled receptor 1 family. Adrenergic receptor subfamily. ADRA1B sub-subfamily. As to quaternary structure, homo- and heterooligomer. Heterooligomerizes with ADRA1B homooligomers in cardiac myocytes. Interacts with CAVIN4.

Its subcellular location is the nucleus membrane. It is found in the cell membrane. It localises to the cytoplasm. The protein localises to the membrane. The protein resides in the caveola. In terms of biological role, this alpha-adrenergic receptor mediates its action by association with G proteins that activate a phosphatidylinositol-calcium second messenger system. Its effect is mediated by G(q) and G(11) proteins. Nuclear ADRA1A-ADRA1B heterooligomers regulate phenylephrine (PE)-stimulated ERK signaling in cardiac myocytes. This is Alpha-1B adrenergic receptor (ADRA1B) from Mesocricetus auratus (Golden hamster).